Consider the following 592-residue polypeptide: Glutamine-rich protein 2 (592 aa).

The tract at residues 488 to 592 is disordered; the sequence is QLQQAQHARP…TRGPRSTAAH (105 aa). The segment covering 544–567 has biased composition (polar residues); it reads LQSNVSHSSIPTDIASLQGSQQGL.

Interacts with AKAP3, ODF2 and TSSK4. Interacts with AKAP4. Expressed in testis. Not detected in heart, brain, kidney, stomach, ovary, liver, lung and uterus.

The protein resides in the nucleus membrane. It localises to the nucleus. Its subcellular location is the cytoplasm. The protein localises to the cell projection. It is found in the cilium. The protein resides in the flagellum. Its function is as follows. Has an essential role in the formation of sperm flagella and flagellar structure maintainance. It acts as a suppressor of ubiquitination and degradation of proteins involved in flagellar development and motility. The protein is Glutamine-rich protein 2 of Mus musculus (Mouse).